A 538-amino-acid polypeptide reads, in one-letter code: Chaperonin GroEL 2 (538 aa).

Residues Thr-29–Pro-32, Asp-86–Thr-90, Gly-412, Asn-479–Ala-481, and Asp-495 contribute to the ATP site.

This sequence belongs to the chaperonin (HSP60) family. As to quaternary structure, forms a cylinder of 14 subunits composed of two heptameric rings stacked back-to-back. Interacts with the co-chaperonin GroES.

Its subcellular location is the cytoplasm. It catalyses the reaction ATP + H2O + a folded polypeptide = ADP + phosphate + an unfolded polypeptide.. Functionally, together with its co-chaperonin GroES, plays an essential role in assisting protein folding. The GroEL-GroES system forms a nano-cage that allows encapsulation of the non-native substrate proteins and provides a physical environment optimized to promote and accelerate protein folding. The protein is Chaperonin GroEL 2 of Renibacterium salmoninarum (strain ATCC 33209 / DSM 20767 / JCM 11484 / NBRC 15589 / NCIMB 2235).